The primary structure comprises 84 residues: Exodeoxyribonuclease 7 small subunit (84 aa).

Belongs to the XseB family. In terms of assembly, heterooligomer composed of large and small subunits.

The protein resides in the cytoplasm. The enzyme catalyses Exonucleolytic cleavage in either 5'- to 3'- or 3'- to 5'-direction to yield nucleoside 5'-phosphates.. In terms of biological role, bidirectionally degrades single-stranded DNA into large acid-insoluble oligonucleotides, which are then degraded further into small acid-soluble oligonucleotides. The polypeptide is Exodeoxyribonuclease 7 small subunit (Bartonella quintana (strain Toulouse) (Rochalimaea quintana)).